A 130-amino-acid chain; its full sequence is NADH-quinone oxidoreductase subunit A (130 aa).

A run of 3 helical transmembrane segments spans residues 15 to 35 (AIHV…ATII), 67 to 87 (FLIA…FAWA), and 95 to 115 (WVGL…LIYL).

It belongs to the complex I subunit 3 family. As to quaternary structure, NDH-1 is composed of 14 different subunits. Subunits NuoA, H, J, K, L, M, N constitute the membrane sector of the complex.

It is found in the cell inner membrane. The enzyme catalyses a quinone + NADH + 5 H(+)(in) = a quinol + NAD(+) + 4 H(+)(out). NDH-1 shuttles electrons from NADH, via FMN and iron-sulfur (Fe-S) centers, to quinones in the respiratory chain. The immediate electron acceptor for the enzyme in this species is believed to be ubiquinone. Couples the redox reaction to proton translocation (for every two electrons transferred, four hydrogen ions are translocated across the cytoplasmic membrane), and thus conserves the redox energy in a proton gradient. The chain is NADH-quinone oxidoreductase subunit A from Rhodopseudomonas palustris (strain BisA53).